The following is a 548-amino-acid chain: Spindle pole body-associated protein cut12 (548 aa).

Positions 122-325 (FKSPLLQSTP…GQQSKYKGKE (204 aa)) are interaction with plo1. The tract at residues 123 to 182 (KSPLLQSTPKPNINNPDNENKSKHDEFDNRYNININESYKNETKSNQRLGEDVPSKKKYP) is disordered. Positions 126 to 139 (LLQSTPKPNINNPD) are enriched in polar residues. Basic and acidic residues-rich tracts occupy residues 140–151 (NENKSKHDEFDN) and 161–182 (YKNE…KKYP). A coiled-coil region spans residues 261–312 (KQKFSMLDSAHSDLELELTSIRERLESLILEKQEEINFWKQRCRALETEKIH). Positions 344-356 (PITTKVVSRPSQS) are enriched in polar residues. Disordered regions lie at residues 344–369 (PITT…PSKN) and 510–548 (SRVD…QLNS). Positions 522–548 (RTANAKKRLEERRRRRKLKLQELQLNS) form a coiled coil.

As to quaternary structure, self-associates. Interacts with plo1.

Its subcellular location is the cytoplasm. It is found in the cytoskeleton. It localises to the microtubule organizing center. The protein localises to the spindle pole body. Its function is as follows. Required for bipolar spindle formation. May act as a regulator of the p34cdc2/cyclin B kinase. Required for full activation of the plo1 kinase. However, in cut12.1 cells at restrictive temperature the H1 kinase does rise concomitant with entry into mitosis, indicating that cut12 is not required for activation of p34cdc2/cyclin B. The cut12.s11 allele may promote cdc2-independent phosphorylation of SPB proteins thereby overcoming the requirement for cdc25 in cell cycle progression. The chain is Spindle pole body-associated protein cut12 (cut12) from Schizosaccharomyces pombe (strain 972 / ATCC 24843) (Fission yeast).